Reading from the N-terminus, the 177-residue chain is Secretion monitor (177 aa).

Residues 1–37 form the signal peptide; sequence MIGILNRWRQFGRRYFWPHLLLGMVAASLGVPLNLSG.

This sequence belongs to the SecM family.

The protein resides in the cytoplasm. Its subcellular location is the cytosol. The protein localises to the periplasm. Regulates secA expression by translational coupling of the secM secA operon. Translational pausing at a specific Pro residue 5 residues before the end of the protein may allow disruption of a mRNA repressor helix that normally suppresses secA translation initiation. In Yersinia pestis bv. Antiqua (strain Antiqua), this protein is Secretion monitor.